A 109-amino-acid polypeptide reads, in one-letter code: Nucleoid-associated protein YbaB (109 aa).

It belongs to the YbaB/EbfC family. In terms of assembly, homodimer.

The protein localises to the cytoplasm. It localises to the nucleoid. Functionally, binds to DNA and alters its conformation. May be involved in regulation of gene expression, nucleoid organization and DNA protection. This Escherichia coli O127:H6 (strain E2348/69 / EPEC) protein is Nucleoid-associated protein YbaB.